The primary structure comprises 528 residues: Transcriptional activator protein UGA3 (528 aa).

A DNA-binding region (zn(2)-C6 fungal-type) is located at residues 17–44 (CITCKIRKKRCSEDKPVCRDCRRLSFPC). Positions 55–62 (SLKKIKAD) match the Nuclear localization signal motif.

In terms of assembly, UGA3 proteins associate in oligomers, at least in the presence of inducer.

Its subcellular location is the nucleus. GABA-dependent positive regulation of genes required for catabolism of GABA (UGA4, UGA1, and UGA2). This Saccharomyces cerevisiae (strain ATCC 204508 / S288c) (Baker's yeast) protein is Transcriptional activator protein UGA3 (UGA3).